Reading from the N-terminus, the 206-residue chain is Small ribosomal subunit protein uS4 (206 aa).

One can recognise an S4 RNA-binding domain in the interval 96–156 (GRLDNVVYRM…EKAKKQSRVK (61 aa)).

Belongs to the universal ribosomal protein uS4 family. As to quaternary structure, part of the 30S ribosomal subunit. Contacts protein S5. The interaction surface between S4 and S5 is involved in control of translational fidelity.

One of the primary rRNA binding proteins, it binds directly to 16S rRNA where it nucleates assembly of the body of the 30S subunit. Its function is as follows. With S5 and S12 plays an important role in translational accuracy. The chain is Small ribosomal subunit protein uS4 from Escherichia fergusonii (strain ATCC 35469 / DSM 13698 / CCUG 18766 / IAM 14443 / JCM 21226 / LMG 7866 / NBRC 102419 / NCTC 12128 / CDC 0568-73).